Here is a 170-residue protein sequence, read N- to C-terminus: Shikimate kinase (170 aa).

11 to 16 (LSGKST) is a binding site for ATP. A Mg(2+)-binding site is contributed by Ser15. Substrate-binding residues include Asp33, Arg57, and Gly79. Residue Arg119 participates in ATP binding. Residue Arg137 coordinates substrate.

It belongs to the shikimate kinase family. Monomer. It depends on Mg(2+) as a cofactor.

The protein localises to the cytoplasm. The enzyme catalyses shikimate + ATP = 3-phosphoshikimate + ADP + H(+). Its pathway is metabolic intermediate biosynthesis; chorismate biosynthesis; chorismate from D-erythrose 4-phosphate and phosphoenolpyruvate: step 5/7. Functionally, catalyzes the specific phosphorylation of the 3-hydroxyl group of shikimic acid using ATP as a cosubstrate. This chain is Shikimate kinase, found in Clostridium botulinum (strain Langeland / NCTC 10281 / Type F).